The primary structure comprises 320 residues: MAIVNVNHFLKEVESTDLKIDAIASSELYKDATFFKPDVLNCIKRFESNVKVSQGQGDGLVLSDFKLLDDTEIDSIRKKSNKYKYLHYGVILVGIKAMLPNFRGMEGRVIVYDGACLDPERGHICSYLFRFESDCCYFGLRPEHCLSTTDVNLAKRFRFRVDFDCPQYEQDTELFALDIGVAYRCVNSARFLETKTGDSGWASQAISGCEALKYNEEIKMAILDHKSPLFLEEGAPNVHIEKRMFRGDKIRRSRSISAKRGPNSRSKETRGFRSLSARIERFGKDEFGRRASTSEAPPGRSVSVEDTDRPGKGNSDGSSP.

Residues His144, Asp171, and Ser199 contribute to the active site. Positions 251 to 320 are disordered; it reads RRSRSISAKR…GKGNSDGSSP (70 aa). Residues 278 to 289 show a composition bias toward basic and acidic residues; sequence RIERFGKDEFGR.

Belongs to the tobamoviruses movement protein family.

In terms of biological role, may play a role in viral cell to cell movement by increasing the size exclusion limit of plasmodesmata and forming a complex with viral RNA to assist its movement. May also have a papain-like protease activity and cleave the genome polyprotein. The protein is Putative movement protein of Malus sylvestris (European crab apple).